Consider the following 430-residue polypeptide: MKTTIKQAKQHLNQEVTIGAWLTNKRSSGKIAFLQLRDGSGFMQGVVVKSEVSDETFQLAKEITQESSLYVTGVITEDNRSDLGYEMQVKSIEVIHEAHDYPITPKNHGTEFLMDHRHLWLRSKKQHAVMKIRNEIIRATYEFFNENGFTKIDPPILTASAPEGTSELFHTKYFDEDAFLSQSGQLYMEAAAMAHGRVFSFGPTFRAEKSKTRRHLIEFWMIEPEMAFTNHVESLEVQEQYVSHVVKSVLKNCQLELKALDRDTSKLEKVSAPFPRISYDDAIKFLKEEGFNDIEWGEDFGAPHETAIANHYDLPVFITNYPTKIKPFYMQPNPENEETVLCADLIAPEGYGEIIGGSERINDLELLEQRIDEHQLDAESYNYYLDLRRYGSVPHSGFGLGLERTVAWISGVEHVRETAPFPRLLNRLYP.

Belongs to the class-II aminoacyl-tRNA synthetase family. Homodimer.

Its subcellular location is the cytoplasm. The enzyme catalyses tRNA(Asn) + L-asparagine + ATP = L-asparaginyl-tRNA(Asn) + AMP + diphosphate + H(+). The polypeptide is Asparagine--tRNA ligase (Staphylococcus haemolyticus (strain JCSC1435)).